We begin with the raw amino-acid sequence, 1479 residues long: Type VII secretion system protein EssC (1479 aa).

Residues 1-189 (MHKLIIKYNK…ASSLIRLTQE (189 aa)) form a required for substrate secretion, protein missing this segment is unstable region. Residues 1–229 (MHKLIIKYNK…RPPQPIQKNN (229 aa)) lie on the Cytoplasmic side of the membrane. The helical transmembrane segment at 230–252 (TVIWRSIIPPLVMIALTVVIFLV) threads the bilayer. Topologically, residues 253 to 256 (RPIG) are extracellular. A helical transmembrane segment spans residues 257 to 279 (IYILMMIGMSTVTIVFGITTYFS). Over 280–1479 (EKKKYNKDVE…QAYQKIRWFK (1200 aa)) the chain is Cytoplasmic. FtsK domains follow at residues 652-846 (DDIL…QDSN) and 997-1183 (QGPM…SEVS). Residues 672 to 679 (GTTGSGKS) and 1014 to 1021 (GSPGYGRT) each bind ATP. A required for substrate secretion, truncated protein is stable region spans residues 1249–1479 (MMPDEIKYED…QAYQKIRWFK (231 aa)).

It belongs to the EssC family. Homooligomer. Interacts with EsaE.

It is found in the cell membrane. Its function is as follows. Component of the type VII secretion system (Ess). Required for the secretion of substrates including EsxA and EsxB. However, unable to support secretion of the substrate protein EsxC. The sequence is that of Type VII secretion system protein EssC from Staphylococcus aureus (strain NCTC 8325 / PS 47).